The following is a 955-amino-acid chain: 2-oxoglutarate dehydrogenase E1 component (955 aa).

Belongs to the alpha-ketoglutarate dehydrogenase family. In terms of assembly, homodimer. Part of the 2-oxoglutarate dehydrogenase (OGDH) complex composed of E1 (2-oxoglutarate dehydrogenase), E2 (dihydrolipoamide succinyltransferase) and E3 (dihydrolipoamide dehydrogenase); the complex contains multiple copies of the three enzymatic components (E1, E2 and E3). Thiamine diphosphate is required as a cofactor.

The catalysed reaction is N(6)-[(R)-lipoyl]-L-lysyl-[protein] + 2-oxoglutarate + H(+) = N(6)-[(R)-S(8)-succinyldihydrolipoyl]-L-lysyl-[protein] + CO2. In terms of biological role, E1 component of the 2-oxoglutarate dehydrogenase (OGDH) complex which catalyzes the decarboxylation of 2-oxoglutarate, the first step in the conversion of 2-oxoglutarate to succinyl-CoA and CO(2). The sequence is that of 2-oxoglutarate dehydrogenase E1 component from Bacillus anthracis (strain A0248).